The primary structure comprises 968 residues: RNA polymerase-associated protein RapA (968 aa).

The 171-residue stretch at 164–334 (DVGRRHAPRV…FARLRLLDPN (171 aa)) folds into the Helicase ATP-binding domain. 177 to 184 (DEVGLGKT) provides a ligand contact to ATP. The short motif at 280 to 283 (DEAH) is the DEAH box element. One can recognise a Helicase C-terminal domain in the interval 490–662 (RVEWLMGYLT…YLAAPENTEG (173 aa)).

The protein belongs to the SNF2/RAD54 helicase family. RapA subfamily. Interacts with the RNAP. Has a higher affinity for the core RNAP than for the holoenzyme. Its ATPase activity is stimulated by binding to RNAP.

Its function is as follows. Transcription regulator that activates transcription by stimulating RNA polymerase (RNAP) recycling in case of stress conditions such as supercoiled DNA or high salt concentrations. Probably acts by releasing the RNAP, when it is trapped or immobilized on tightly supercoiled DNA. Does not activate transcription on linear DNA. Probably not involved in DNA repair. This is RNA polymerase-associated protein RapA from Cronobacter sakazakii (strain ATCC BAA-894) (Enterobacter sakazakii).